Here is a 362-residue protein sequence, read N- to C-terminus: Caveolae-associated protein 4 (362 aa).

Residues 1–24 (MEHNGSASNAGKIHQNRLSSVTED) are disordered. Positions 100-120 (IKDVKARVEKQQVRVTKVETK) form a coiled coil. Residues Ser-152, Ser-171, and Ser-172 each carry the phosphoserine modification. Composition is skewed to basic and acidic residues over residues 230-255 (RERL…ERFK), 275-289 (KAKD…VDRG), and 305-320 (HEFH…KEVT). Disordered stretches follow at residues 230–289 (RERL…VDRG) and 305–346 (HEFH…KPQV). At Tyr-324 the chain carries Phosphotyrosine. Thr-334 is subject to Phosphothreonine. The residue at position 353 (Ser-353) is a Phosphoserine.

The protein belongs to the CAVIN family. Component of the CAVIN complex composed of CAVIN1, CAVIN2, CAVIN3 and CAVIN4. Interacts with CAVIN1. Interacts with CAVIN2; this augments the transactivation of NPPA. Interacts with CAV3, ADRA1A, ADRA1B, MAPK1 and MAPK3. In terms of tissue distribution, abundantly expressed in cardiac and skeletal muscle (at protein level). Weaker expression in aorta and lung. In heart, expressed in cardiomyocytes and vascular smooth muscle cells but not in other surrounding cells including vascular endothelial cells.

The protein resides in the cytoplasm. The protein localises to the myofibril. It localises to the sarcomere. Its subcellular location is the cytosol. It is found in the membrane. The protein resides in the caveola. The protein localises to the cell membrane. It localises to the sarcolemma. Functionally, modulates the morphology of formed caveolae in cardiomyocytes, but is not required for caveolar formation. Facilitates the recruitment of MAPK1/3 to caveolae within cardiomyocytes and regulates alpha-1 adrenergic receptor-induced hypertrophic responses in cardiomyocytes through MAPK1/3 activation. Contributes to proper membrane localization and stabilization of caveolin-3 (CAV3) in cardiomyocytes. Induces RHOA activation and activates NPPA transcription and myofibrillar organization through the Rho/ROCK signaling pathway. The sequence is that of Caveolae-associated protein 4 (Cavin4) from Mus musculus (Mouse).